The following is a 193-amino-acid chain: Orotate phosphoribosyltransferase (193 aa).

114–122 (EDVITTGGS) is a 5-phospho-alpha-D-ribose 1-diphosphate binding site. Orotate is bound by residues Thr-118 and Arg-146.

The protein belongs to the purine/pyrimidine phosphoribosyltransferase family. PyrE subfamily. As to quaternary structure, homodimer. Mg(2+) is required as a cofactor.

It catalyses the reaction orotidine 5'-phosphate + diphosphate = orotate + 5-phospho-alpha-D-ribose 1-diphosphate. It functions in the pathway pyrimidine metabolism; UMP biosynthesis via de novo pathway; UMP from orotate: step 1/2. Functionally, catalyzes the transfer of a ribosyl phosphate group from 5-phosphoribose 1-diphosphate to orotate, leading to the formation of orotidine monophosphate (OMP). The chain is Orotate phosphoribosyltransferase from Chlorobium phaeobacteroides (strain DSM 266 / SMG 266 / 2430).